Reading from the N-terminus, the 776-residue chain is Mitochondrial intermediate peptidase (776 aa).

The N-terminal 38 residues, 1–38 (MLNSARTVLARHSARQLYRFRGCLVHQQRHRHQVQRTL), are a transit peptide targeting the mitochondrion. Histidine 560 is a Zn(2+) binding site. The active site involves glutamate 561. Zn(2+) contacts are provided by histidine 564 and histidine 567.

It belongs to the peptidase M3 family. Zn(2+) is required as a cofactor.

Its subcellular location is the mitochondrion matrix. It catalyses the reaction Release of an N-terminal octapeptide as second stage of processing of some proteins imported into the mitochondrion.. Its function is as follows. Cleaves proteins, imported into the mitochondrion, to their mature size. While most mitochondrial precursor proteins are processed to the mature form in one step by mitochondrial processing peptidase (MPP), the sequential cleavage by MIP of an octapeptide after initial processing by MPP is a required step for a subgroup of nuclear-encoded precursor proteins destined for the matrix or the inner membrane. This chain is Mitochondrial intermediate peptidase (OCT1), found in Coprinopsis cinerea (strain Okayama-7 / 130 / ATCC MYA-4618 / FGSC 9003) (Inky cap fungus).